The chain runs to 559 residues: Asparagine--tRNA ligase, cytoplasmic (559 aa).

Ser72 bears the Phosphoserine mark. Positions 82–102 (HREQMKNDSREKKEAEDNLRR) are disordered. Position 255 is an N6-acetyllysine (Lys255). Ser493 is subject to Phosphoserine. The residue at position 501 (Lys501) is an N6-acetyllysine.

This sequence belongs to the class-II aminoacyl-tRNA synthetase family. As to quaternary structure, homodimer.

It is found in the cytoplasm. It carries out the reaction tRNA(Asn) + L-asparagine + ATP = L-asparaginyl-tRNA(Asn) + AMP + diphosphate + H(+). Its function is as follows. Catalyzes the attachment of asparagine to tRNA(Asn) in a two-step reaction: asparagine is first activated by ATP to form Asn-AMP and then transferred to the acceptor end of tRNA(Asn). In addition to its essential role in protein synthesis, acts as a signaling molecule that induced migration of CCR3-expressing cells. Has an essential role in the development of the cerebral cortex, being required for proper proliferation of radial glial cells. The sequence is that of Asparagine--tRNA ligase, cytoplasmic from Mus musculus (Mouse).